We begin with the raw amino-acid sequence, 209 residues long: Cytidylyl-2-hydroxypropylphosphonate hydrolase (209 aa).

Residues Asn111, Asp127, Glu129, and Asp131 each contribute to the a divalent metal cation site. The active-site Proton donor is Lys144. Asp145 lines the a divalent metal cation pocket.

This sequence belongs to the FomD family. As to quaternary structure, monomer in solution. Mn(2+) is required as a cofactor. Requires Co(2+) as cofactor.

It catalyses the reaction cytidine 5'-({hydroxy[(S)-2-hydroxypropyl]phosphonoyl}phosphate) + H2O = (S)-2-hydroxypropylphosphonate + CMP + H(+). It functions in the pathway antibiotic biosynthesis; fosfomycin biosynthesis. Hydrolysis of (S)-HPP-CMP is inhibited by CDP. Involved in fosfomycin biosynthesis. Catalyzes the hydrolysis of cytidylyl (S)-2-hydroxypropylphosphonate ((S)-HPP-CMP) to give (S)-2-hydroxypropylphosphonate ((S)-HPP) and CMP. Can also hydrolyze (R)-HPP-CMP and cytidylyl 2-hydroxyethylphosphonate (HEP-CMP), which is a biosynthetic intermediate before C-methylation, but the catalytic efficiency is much higher with (S)-HPP-CMP. In Streptomyces wedmorensis, this protein is Cytidylyl-2-hydroxypropylphosphonate hydrolase.